The following is a 116-amino-acid chain: Large ribosomal subunit protein uL18 (116 aa).

The protein belongs to the universal ribosomal protein uL18 family. In terms of assembly, part of the 50S ribosomal subunit; part of the 5S rRNA/L5/L18/L25 subcomplex. Contacts the 5S and 23S rRNAs.

Its function is as follows. This is one of the proteins that bind and probably mediate the attachment of the 5S RNA into the large ribosomal subunit, where it forms part of the central protuberance. The sequence is that of Large ribosomal subunit protein uL18 from Hahella chejuensis (strain KCTC 2396).